Here is a 483-residue protein sequence, read N- to C-terminus: tRNA-2-methylthio-N(6)-dimethylallyladenosine synthase (483 aa).

Residues 31-148 (KKLYIETQGC…LPQMLDQHHA (118 aa)) form the MTTase N-terminal domain. [4Fe-4S] cluster contacts are provided by Cys-40, Cys-77, Cys-111, Cys-192, Cys-196, and Cys-199. The Radical SAM core domain occupies 178–410 (RVEGFKAFVS…QQVIKQSSIE (233 aa)). Residues 413–477 (DAMLGKIERV…LNLVYGELLN (65 aa)) enclose the TRAM domain.

It belongs to the methylthiotransferase family. MiaB subfamily. Monomer. Requires [4Fe-4S] cluster as cofactor.

The protein resides in the cytoplasm. It carries out the reaction N(6)-dimethylallyladenosine(37) in tRNA + (sulfur carrier)-SH + AH2 + 2 S-adenosyl-L-methionine = 2-methylsulfanyl-N(6)-dimethylallyladenosine(37) in tRNA + (sulfur carrier)-H + 5'-deoxyadenosine + L-methionine + A + S-adenosyl-L-homocysteine + 2 H(+). Functionally, catalyzes the methylthiolation of N6-(dimethylallyl)adenosine (i(6)A), leading to the formation of 2-methylthio-N6-(dimethylallyl)adenosine (ms(2)i(6)A) at position 37 in tRNAs that read codons beginning with uridine. The polypeptide is tRNA-2-methylthio-N(6)-dimethylallyladenosine synthase (Acinetobacter baumannii (strain AB0057)).